Here is a 302-residue protein sequence, read N- to C-terminus: Phosphoribosylaminoimidazole-succinocarboxamide synthase (302 aa).

Belongs to the SAICAR synthetase family.

The enzyme catalyses 5-amino-1-(5-phospho-D-ribosyl)imidazole-4-carboxylate + L-aspartate + ATP = (2S)-2-[5-amino-1-(5-phospho-beta-D-ribosyl)imidazole-4-carboxamido]succinate + ADP + phosphate + 2 H(+). The protein operates within purine metabolism; IMP biosynthesis via de novo pathway; 5-amino-1-(5-phospho-D-ribosyl)imidazole-4-carboxamide from 5-amino-1-(5-phospho-D-ribosyl)imidazole-4-carboxylate: step 1/2. The sequence is that of Phosphoribosylaminoimidazole-succinocarboxamide synthase from Cupriavidus necator (strain ATCC 17699 / DSM 428 / KCTC 22496 / NCIMB 10442 / H16 / Stanier 337) (Ralstonia eutropha).